The chain runs to 583 residues: Isocitrate dehydrogenase kinase/phosphatase (583 aa).

ATP is bound by residues 315–321 (APGIRGM) and K336. D371 is a catalytic residue.

Belongs to the AceK family.

It is found in the cytoplasm. The enzyme catalyses L-seryl-[isocitrate dehydrogenase] + ATP = O-phospho-L-seryl-[isocitrate dehydrogenase] + ADP + H(+). Bifunctional enzyme which can phosphorylate or dephosphorylate isocitrate dehydrogenase (IDH) on a specific serine residue. This is a regulatory mechanism which enables bacteria to bypass the Krebs cycle via the glyoxylate shunt in response to the source of carbon. When bacteria are grown on glucose, IDH is fully active and unphosphorylated, but when grown on acetate or ethanol, the activity of IDH declines drastically concomitant with its phosphorylation. The polypeptide is Isocitrate dehydrogenase kinase/phosphatase (Salmonella paratyphi B (strain ATCC BAA-1250 / SPB7)).